We begin with the raw amino-acid sequence, 199 residues long: Adenylyl-sulfate kinase (199 aa).

A disordered region spans residues 1–22; it reads MSESNHITWHDSEVTKKQRQHK. 34-41 contributes to the ATP binding site; that stretch reads GLSGSGKS. Ser-108 acts as the Phosphoserine intermediate in catalysis.

Belongs to the APS kinase family.

It carries out the reaction adenosine 5'-phosphosulfate + ATP = 3'-phosphoadenylyl sulfate + ADP + H(+). It functions in the pathway sulfur metabolism; hydrogen sulfide biosynthesis; sulfite from sulfate: step 2/3. Functionally, catalyzes the synthesis of activated sulfate. The protein is Adenylyl-sulfate kinase of Staphylococcus epidermidis (strain ATCC 12228 / FDA PCI 1200).